The following is a 141-amino-acid chain: Large ribosomal subunit protein uL11 (141 aa).

Belongs to the universal ribosomal protein uL11 family. As to quaternary structure, part of the ribosomal stalk of the 50S ribosomal subunit. Interacts with L10 and the large rRNA to form the base of the stalk. L10 forms an elongated spine to which L12 dimers bind in a sequential fashion forming a multimeric L10(L12)X complex. Post-translationally, one or more lysine residues are methylated.

Functionally, forms part of the ribosomal stalk which helps the ribosome interact with GTP-bound translation factors. The chain is Large ribosomal subunit protein uL11 from Gloeothece citriformis (strain PCC 7424) (Cyanothece sp. (strain PCC 7424)).